Reading from the N-terminus, the 74-residue chain is Bacteriocin hiracin-JM79 (74 aa).

Residues 1–30 (MKKKVLKHCVILGILGTCLAGIGTGIKVDA) form the signal peptide.

Its subcellular location is the secreted. Functionally, bacteriocin with antibacterial activity against the Gram-positive Listeria, Enterococcus, Propionibacterium, Staphylococcus and some strains of Clostridium, Lactobacillus and Pediococcus. Lacks antibacterial activity against Gram-negative bacteria. The sequence is that of Bacteriocin hiracin-JM79 from Enterococcus hirae.